The following is a 166-amino-acid chain: MIYVDNRQEKMEVSDEFTNHLEKVIEFALKEEGVNISSEISLLFVDNEEIREINNETRNIDRATDVLSFPMLDYPEKKVFKEVYTENDFSEADFDGDDLVLGDVVLSLERALEQSKEYNHSYEREASYLVVHSVLHLLGYDHMEEEDKVKMRKREEEILTALDIRR.

Positions 132, 136, and 142 each coordinate Zn(2+).

This sequence belongs to the endoribonuclease YbeY family. The cofactor is Zn(2+).

The protein localises to the cytoplasm. In terms of biological role, single strand-specific metallo-endoribonuclease involved in late-stage 70S ribosome quality control and in maturation of the 3' terminus of the 16S rRNA. The protein is Endoribonuclease YbeY of Clostridium botulinum (strain Eklund 17B / Type B).